The primary structure comprises 161 residues: Large ribosomal subunit protein uL10 (161 aa).

This sequence belongs to the universal ribosomal protein uL10 family. In terms of assembly, part of the ribosomal stalk of the 50S ribosomal subunit. The N-terminus interacts with L11 and the large rRNA to form the base of the stalk. The C-terminus forms an elongated spine to which L12 dimers bind in a sequential fashion forming a multimeric L10(L12)X complex.

Forms part of the ribosomal stalk, playing a central role in the interaction of the ribosome with GTP-bound translation factors. In Buchnera aphidicola subsp. Cinara cedri (strain Cc), this protein is Large ribosomal subunit protein uL10.